The chain runs to 195 residues: Glycerol-3-phosphate acyltransferase (195 aa).

5 consecutive transmembrane segments (helical) span residues 3–23 (IHAV…GLIL), 53–73 (AVMT…LAKI), 80–100 (FAFI…WLLF), 115–135 (LIEY…FAIF), and 147–167 (IFVA…VFIA).

The protein belongs to the PlsY family. Probably interacts with PlsX.

It localises to the cell inner membrane. The enzyme catalyses an acyl phosphate + sn-glycerol 3-phosphate = a 1-acyl-sn-glycero-3-phosphate + phosphate. It participates in lipid metabolism; phospholipid metabolism. Functionally, catalyzes the transfer of an acyl group from acyl-phosphate (acyl-PO(4)) to glycerol-3-phosphate (G3P) to form lysophosphatidic acid (LPA). This enzyme utilizes acyl-phosphate as fatty acyl donor, but not acyl-CoA or acyl-ACP. The protein is Glycerol-3-phosphate acyltransferase of Ehrlichia chaffeensis (strain ATCC CRL-10679 / Arkansas).